Here is a 247-residue protein sequence, read N- to C-terminus: 1-(5-phosphoribosyl)-5-[(5-phosphoribosylamino)methylideneamino] imidazole-4-carboxamide isomerase (247 aa).

Asp8 acts as the Proton acceptor in catalysis. Residue Asp131 is the Proton donor of the active site.

It belongs to the HisA/HisF family.

The protein localises to the cytoplasm. It carries out the reaction 1-(5-phospho-beta-D-ribosyl)-5-[(5-phospho-beta-D-ribosylamino)methylideneamino]imidazole-4-carboxamide = 5-[(5-phospho-1-deoxy-D-ribulos-1-ylimino)methylamino]-1-(5-phospho-beta-D-ribosyl)imidazole-4-carboxamide. Its pathway is amino-acid biosynthesis; L-histidine biosynthesis; L-histidine from 5-phospho-alpha-D-ribose 1-diphosphate: step 4/9. The polypeptide is 1-(5-phosphoribosyl)-5-[(5-phosphoribosylamino)methylideneamino] imidazole-4-carboxamide isomerase (Acidovorax sp. (strain JS42)).